Reading from the N-terminus, the 167-residue chain is Bacterial non-heme ferritin (167 aa).

The Ferritin-like diiron domain maps to methionine 1–glycine 145. Residues glutamate 17, glutamate 50, histidine 53, glutamate 94, and glutamine 127 each coordinate Fe cation.

Belongs to the ferritin family. Prokaryotic subfamily. As to quaternary structure, homooligomer of 24 subunits that assemble into a spherical protein shell (12 +/- 1 nM diameter) that can sequester at least 2000 iron atoms.

Its subcellular location is the cytoplasm. It catalyses the reaction 4 Fe(2+) + O2 + 6 H2O = 4 iron(III) oxide-hydroxide + 12 H(+). Its function is as follows. Iron-storage protein. This is Bacterial non-heme ferritin (ftnA) from Helicobacter pylori (strain J99 / ATCC 700824) (Campylobacter pylori J99).